Reading from the N-terminus, the 428-residue chain is Enolase (428 aa).

Gln163 contacts (2R)-2-phosphoglycerate. The active-site Proton donor is the Glu205. 3 residues coordinate Mg(2+): Asp243, Glu286, and Asp313. Residues Lys338, Arg367, Ser368, and Lys389 each coordinate (2R)-2-phosphoglycerate. Lys338 serves as the catalytic Proton acceptor.

The protein belongs to the enolase family. Mg(2+) serves as cofactor.

It localises to the cytoplasm. The protein resides in the secreted. Its subcellular location is the cell surface. It carries out the reaction (2R)-2-phosphoglycerate = phosphoenolpyruvate + H2O. The protein operates within carbohydrate degradation; glycolysis; pyruvate from D-glyceraldehyde 3-phosphate: step 4/5. Its function is as follows. Catalyzes the reversible conversion of 2-phosphoglycerate (2-PG) into phosphoenolpyruvate (PEP). It is essential for the degradation of carbohydrates via glycolysis. This chain is Enolase, found in Polaromonas naphthalenivorans (strain CJ2).